A 1896-amino-acid polypeptide reads, in one-letter code: Trinucleotide repeat-containing gene 6A protein (1896 aa).

Basic and acidic residues-rich tracts occupy residues 1–21 (MRELEAKATKDVERNLSRDLV) and 39–57 (KKKEAAQKKATEQKIKVPE). 4 disordered regions span residues 1 to 137 (MREL…LLKR), 159 to 209 (SESS…DCST), 222 to 250 (EAWPSAPGSDPELAPECIDADSASNSESE), and 257 to 276 (ASGNTGGEKDGLRNSTGLGS). The tract at residues 1-917 (MRELEAKATK…GDPPKCNQSL (917 aa)) is interaction with argonaute family proteins. Low complexity-rich tracts occupy residues 69 to 93 (ANSDNGTSTATSTNNNAKRATASNQ) and 101 to 113 (QQPQQEQQQQQPQ). Basic residues predominate over residues 125–137 (RFRHQEHKQLLKR). The interval 239–488 (IDADSASNSE…QAPSVMNGTS (250 aa)) is sufficient for interaction with AGO1, AGO3 and AGO4. Sufficient for interaction with AGO2 regions lie at residues 255–331 (VMAS…NAWG), 303–384 (GALI…STIG), 325–424 (NRMN…KVSF), 394–480 (SKVS…QIQA), and 487–736 (TSLS…NGTE). 2 stretches are compositionally biased toward polar residues: residues 396–410 (VSGSSTHGTWGSLQE) and 417–429 (SGTQKVSFSGQPQ). 5 disordered regions span residues 396-461 (VSGS…NELP), 548-683 (FQVN…RRKI), 703-998 (LSNS…DPSK), 1011-1126 (IPEA…PTGW), and 1143-1182 (QELNSSLNWPPYTKKMSSKGLSGKKRRRERGMMKGGNKQE). The span at 430–443 (NITTETTGPNNTTN) shows a compositional bias: low complexity. Polar residues predominate over residues 444–461 (FMTSSLPNSGSVQNNELP). The interval 551–1279 (NTNKGGGVWE…MFGVGNTAAQ (729 aa)) is sufficient for interaction with AGO1 and AGO4. Residues 573-584 (SGNGANSGGSRR) show a composition bias toward gly residues. Polar residues-rich tracts occupy residues 591 to 617 (QNTGTGLSSVEWNKLPSNQHSNDSANG) and 635 to 647 (GSATSQTNEQNSV). Basic and acidic residues predominate over residues 665-683 (GRLEEKVTGESQSRDRRKI). Over residues 703–722 (LSNSGWGQTPIKQNTAWDTE) the composition is skewed to polar residues. Basic and acidic residues predominate over residues 723-733 (TSPRGERKTDN). At S724 the chain carries Phosphoserine. Polar residues predominate over residues 738 to 766 (WGSSATQTFNSGACTDKTSPNSNDTSSVS). Residues 858-871 (SSSGGSDSDRSISG) show a composition bias toward low complexity. At S863 the chain carries Phosphoserine. 2 stretches are compositionally biased toward polar residues: residues 876 to 906 (GKTSSFTWGNNINPNNSSGWDESSKPNSSQG) and 924 to 937 (KPVSSPDWNKQQDI). S976 carries the phosphoserine modification. 3 stretches are compositionally biased toward polar residues: residues 1033 to 1042 (AVSSKETSSG), 1054 to 1064 (TPATTVDNGTS), and 1082 to 1105 (AASNASTWGSSSVGPQSLSKSGPK). The interval 1059-1129 (VDNGTSAWGK…GSRPTGWEEE (71 aa)) is sufficient for interaction with AGO2. Residues 1143–1163 (QELNSSLNWPPYTKKMSSKGL) show a composition bias toward low complexity. Phosphoserine is present on residues S1197 and S1255. Disordered regions lie at residues 1234 to 1256 (GDYNRTVGKGPGSRPQISKESSM), 1273 to 1306 (VGNTAAQPRGMQQPPAQPLSSSQPNLRAQVPPPL), and 1360 to 1395 (QRAQSQRSAPSANRQQQDQQGRPLSVQQQMMQQSRQ). 2 stretches are compositionally biased toward low complexity: residues 1284–1296 (QQPPAQPLSSSQP) and 1360–1376 (QRAQSQRSAPSANRQQQ). T1406 carries the post-translational modification Phosphothreonine. Disordered regions lie at residues 1512–1570 (MNSS…VTPG) and 1659–1685 (PKNITAPSRPPPGLTGQKPPLSTWDNS). At S1520 the chain carries Phosphoserine. Positions 1605–1896 (TSAWSSIRAS…DHLGGGGESM (292 aa)) are sufficient for interaction with AGO2. The RRM domain maps to 1716–1788 (NWLVLKNLTP…TTILAEFASE (73 aa)). 2 positions are modified to phosphoserine: S1804 and S1825.

The protein belongs to the GW182 family. As to quaternary structure, interacts with AGO2. Interacts with AGO1, AGO3 and AGO4. Interacts with CNOT1; the interaction is direct and mediates the association with the CCR4-NOT complex. Interacts with ZC3H12A. Interacts with SND1. Interacts with GARRE1.

It is found in the cytoplasm. Its subcellular location is the P-body. Plays a role in RNA-mediated gene silencing by both micro-RNAs (miRNAs) and short interfering RNAs (siRNAs). Required for miRNA-dependent repression of translation and for siRNA-dependent endonucleolytic cleavage of complementary mRNAs by argonaute family proteins. As a scaffolding protein, associates with argonaute proteins bound to partially complementary mRNAs, and can simultaneously recruit CCR4-NOT and PAN deadenylase complexes. The protein is Trinucleotide repeat-containing gene 6A protein (Tnrc6a) of Mus musculus (Mouse).